Here is a 341-residue protein sequence, read N- to C-terminus: Ribulose-5-phosphate reductase 1 (341 aa).

Zn(2+)-binding residues include cysteine 38, histidine 64, glutamate 65, and glutamate 144.

Belongs to the zinc-containing alcohol dehydrogenase family. In terms of assembly, heterodimer together with TarI. Can also form a dimer of heterodimers. Zn(2+) is required as a cofactor.

The catalysed reaction is D-ribitol 5-phosphate + NADP(+) = D-ribulose 5-phosphate + NADPH + H(+). It participates in cell wall biogenesis; poly(ribitol phosphate) teichoic acid biosynthesis. Its function is as follows. Catalyzes the NADPH dependent reduction of D-ribulose 5-phosphate to D-ribitol 5-phosphate. The sequence is that of Ribulose-5-phosphate reductase 1 from Staphylococcus aureus (strain NCTC 8325 / PS 47).